Consider the following 236-residue polypeptide: MSKKVSKNVAKARAAVEPRPYTLQDAVPLLQQVKFAKFDETVDLTMRLGVDPRHADQMVRGTVVLPHGLGKTKKVAVITTGDRQKEAEAAGAEIVGGEELVEKIQKESWTDFDALIATPDMMRSVGRLGKVLGPRGLMPNPKTGTVTNDVAAAVKEIKAGKIEYRTDKTALVHVPVGKLSFPAEKLIDNAMTVITSVVRAKPSAAKGKYIKGITLSSTMGPGIPLDGSVADAAAKA.

This sequence belongs to the universal ribosomal protein uL1 family. Part of the 50S ribosomal subunit.

In terms of biological role, binds directly to 23S rRNA. The L1 stalk is quite mobile in the ribosome, and is involved in E site tRNA release. Functionally, protein L1 is also a translational repressor protein, it controls the translation of the L11 operon by binding to its mRNA. The sequence is that of Large ribosomal subunit protein uL1 from Acidobacterium capsulatum (strain ATCC 51196 / DSM 11244 / BCRC 80197 / JCM 7670 / NBRC 15755 / NCIMB 13165 / 161).